An 816-amino-acid polypeptide reads, in one-letter code: Phosphatidylinositol 4-kinase beta (816 aa).

Disordered stretches follow at residues 1-29, 99-121, and 250-318; these read MGDM…GGSL, EEED…RRRQ, and RKRE…SFSS. An N-acetylglycine modification is found at Gly-2. Positions 2-68 are interaction with ACBD3; that stretch reads GDMVVEPATL…VKLLHGGVAI (67 aa). A compositionally biased stretch (low complexity) spans 10–29; it reads TLKPTSEPTPSPSGNNGGSL. The region spanning 61–242 is the PIK helical domain; the sequence is LLHGGVAISS…GTKLRKLILS (182 aa). Ser-258 carries the post-translational modification Phosphoserine. Residue Thr-263 is modified to Phosphothreonine. Phosphoserine occurs at positions 266, 275, 277, 284, and 294. Polar residues-rich tracts occupy residues 278–297 and 306–318; these read DATA…SNPK and SSST…SFSS. Ser-428 bears the Phosphoserine mark. Thr-438 carries the post-translational modification Phosphothreonine. Phosphoserine is present on Ser-511. Thr-517 and Thr-519 each carry phosphothreonine. In terms of domain architecture, PI3K/PI4K catalytic spans 535-801; that stretch reads EPWQEKVRRI…MVDGSMRSIT (267 aa). Residues 541–547 are G-loop; it reads VRRIREG. The catalytic loop stretch occupies residues 668 to 676; sequence QVKDRHNGN. An activation loop region spans residues 687–711; the sequence is HIDFGFILSSSPRNLGFETSAFKLT.

Belongs to the PI3/PI4-kinase family. Type III PI4K subfamily. Interacts with ARF1 and ARF3 in the Golgi complex, but not with ARF4, ARF5 or ARF6. Interacts with NCS1/FREQ in a calcium-independent manner. Interacts with CALN1/CABP8 and CALN2/CABP7; in a calcium-dependent manner; this interaction competes with NCS1/FREQ binding. Interacts with ACBD3. Interacts with ARMH3, YWHAB, YWHAE, YWHAG, YWHAH, YWHAQ, YWHAZ and SFN. Interacts with GGA2 (via VHS domain); the interaction is important for PI4KB location at the Golgi apparatus membrane. Interacts with ATG9A. Mg(2+) serves as cofactor. It depends on Mn(2+) as a cofactor. In terms of tissue distribution, strongly expressed in brain, kidney, lung, small intestine, uterus and adrenal gland. Weaker expression in liver, heart, skeletal muscle, thymus and testis. Not detected in spleen.

It localises to the golgi apparatus. The protein resides in the endomembrane system. The protein localises to the mitochondrion outer membrane. Its subcellular location is the rough endoplasmic reticulum membrane. It is found in the golgi apparatus membrane. The enzyme catalyses a 1,2-diacyl-sn-glycero-3-phospho-(1D-myo-inositol) + ATP = a 1,2-diacyl-sn-glycero-3-phospho-(1D-myo-inositol 4-phosphate) + ADP + H(+). Its activity is regulated as follows. Inhibited by wortmannin. Increased kinase activity upon interaction with NCS1/FREQ. In terms of biological role, phosphorylates phosphatidylinositol (PI) in the first committed step in the production of the second messenger inositol-1,4,5,-trisphosphate (PIP). May regulate Golgi disintegration/reorganization during mitosis, possibly via its phosphorylation. Involved in Golgi-to-plasma membrane trafficking. May play an important role in the inner ear development. This chain is Phosphatidylinositol 4-kinase beta (Pi4kb), found in Rattus norvegicus (Rat).